The sequence spans 142 residues: Galactose-6-phosphate isomerase subunit LacA (142 aa).

This sequence belongs to the LacAB/RpiB family. Heteromultimeric protein consisting of LacA and LacB.

The enzyme catalyses aldehydo-D-galactose 6-phosphate = keto-D-tagatose 6-phosphate. It participates in carbohydrate metabolism; D-galactose 6-phosphate degradation; D-tagatose 6-phosphate from D-galactose 6-phosphate: step 1/1. This is Galactose-6-phosphate isomerase subunit LacA from Staphylococcus aureus.